A 274-amino-acid chain; its full sequence is MRFTKMHGLGNDFIVIEAVEGVDYSELAVKLCDRHFGIGADGLLVVEPSHIADIKMRIFNADGSEAEMCGNGSRCFAKYVYEKGIVSKQKMTVETLAGVIMPELFVENGKIKSVKVYMGSPIFESSKIPVKSEKQKFIDEPVKIDGKTYRLSSVRVGVPHTILFVSSFEESFMKELGPKIEKSSLFPEGTNVDFVKVEDEENISVRTWERGVGLTLACGSGASASAVVSSLLGRTRRSVNVHFKAGVLLVEWKEDNSIYLSGEVEEVFRGEIEI.

Substrate-binding residues include Asn-11 and Asn-60. The active-site Proton donor is Cys-69. Substrate contacts are provided by residues 70–71 (GN), Asn-191, and 209–210 (ER). Cys-218 (proton acceptor) is an active-site residue. Residue 219-220 (GS) participates in substrate binding.

This sequence belongs to the diaminopimelate epimerase family. As to quaternary structure, homodimer.

The protein resides in the cytoplasm. The catalysed reaction is (2S,6S)-2,6-diaminopimelate = meso-2,6-diaminopimelate. Its pathway is amino-acid biosynthesis; L-lysine biosynthesis via DAP pathway; DL-2,6-diaminopimelate from LL-2,6-diaminopimelate: step 1/1. Its function is as follows. Catalyzes the stereoinversion of LL-2,6-diaminopimelate (L,L-DAP) to meso-diaminopimelate (meso-DAP), a precursor of L-lysine and an essential component of the bacterial peptidoglycan. This chain is Diaminopimelate epimerase, found in Caldanaerobacter subterraneus subsp. tengcongensis (strain DSM 15242 / JCM 11007 / NBRC 100824 / MB4) (Thermoanaerobacter tengcongensis).